A 129-amino-acid chain; its full sequence is Lysozyme C-2 (129 aa).

The region spanning 1–129 is the C-type lysozyme domain; that stretch reads KVFERCELAR…VSSYVEGCTL (129 aa). Cystine bridges form between Cys-6–Cys-127, Cys-30–Cys-115, Cys-65–Cys-81, and Cys-77–Cys-95. Residues Glu-35 and Asp-53 contribute to the active site.

This sequence belongs to the glycosyl hydrolase 22 family. As to quaternary structure, monomer.

The enzyme catalyses Hydrolysis of (1-&gt;4)-beta-linkages between N-acetylmuramic acid and N-acetyl-D-glucosamine residues in a peptidoglycan and between N-acetyl-D-glucosamine residues in chitodextrins.. Lysozymes have primarily a bacteriolytic function; those in tissues and body fluids are associated with the monocyte-macrophage system and enhance the activity of immunoagents. This is Lysozyme C-2 from Capra hircus (Goat).